The chain runs to 551 residues: Alkaline nuclease (551 aa).

The protein belongs to the herpesviridae alkaline nuclease family. As to quaternary structure, interacts with major DNA-binding protein; this interaction increases the nuclease processivity of the alkaline exonuclease.

It is found in the host nucleus. It localises to the host cytoplasm. Plays a role in processing non linear or branched viral DNA intermediates in order to promote the production of mature packaged unit-length linear progeny viral DNA molecules. Exhibits endonuclease and exonuclease activities and accepts both double-stranded and single-stranded DNA as substrate. Exonuclease digestion of DNA is in the 5'-&gt; 3' direction and the products are 5'-monophosphate nucleosides. Additionally, forms a recombinase with the major DNA-binding protein, which displays strand exchange activity. In Varicella-zoster virus (strain Oka vaccine) (HHV-3), this protein is Alkaline nuclease.